The following is a 570-amino-acid chain: Methionine--tRNA ligase (570 aa).

A 'HIGH' region motif is present at residues 14–24; the sequence is PYINGIKHLGN. Zn(2+) is bound by residues C146, C149, C159, and C162. The short motif at 347–351 is the 'KMSKS' region element; it reads QFSTS. T350 provides a ligand contact to ATP.

The protein belongs to the class-I aminoacyl-tRNA synthetase family. MetG type 1 subfamily. Monomer. Zn(2+) serves as cofactor.

It localises to the cytoplasm. It catalyses the reaction tRNA(Met) + L-methionine + ATP = L-methionyl-tRNA(Met) + AMP + diphosphate. Functionally, is required not only for elongation of protein synthesis but also for the initiation of all mRNA translation through initiator tRNA(fMet) aminoacylation. This chain is Methionine--tRNA ligase, found in Jannaschia sp. (strain CCS1).